The sequence spans 494 residues: GTPase Der (494 aa).

2 consecutive EngA-type G domains span residues Lys2–Asp164 and Ile235–Ser407. GTP-binding positions include Gly8–Ser15, Asp55–Leu59, Asn116–Asp119, Gly241–Ser248, Asp288–Leu292, and Asn352–Asp355. Residues Gln408 to Gly492 form the KH-like domain.

This sequence belongs to the TRAFAC class TrmE-Era-EngA-EngB-Septin-like GTPase superfamily. EngA (Der) GTPase family. As to quaternary structure, associates with the 50S ribosomal subunit.

Functionally, GTPase that plays an essential role in the late steps of ribosome biogenesis. The polypeptide is GTPase Der (Sulfurimonas denitrificans (strain ATCC 33889 / DSM 1251) (Thiomicrospira denitrificans (strain ATCC 33889 / DSM 1251))).